The chain runs to 402 residues: Exodeoxyribonuclease 7 large subunit (402 aa).

This sequence belongs to the XseA family. As to quaternary structure, heterooligomer composed of large and small subunits.

Its subcellular location is the cytoplasm. It carries out the reaction Exonucleolytic cleavage in either 5'- to 3'- or 3'- to 5'-direction to yield nucleoside 5'-phosphates.. Bidirectionally degrades single-stranded DNA into large acid-insoluble oligonucleotides, which are then degraded further into small acid-soluble oligonucleotides. In Streptomyces coelicolor (strain ATCC BAA-471 / A3(2) / M145), this protein is Exodeoxyribonuclease 7 large subunit.